The primary structure comprises 822 residues: Putative pentatricopeptide repeat-containing protein At5g13230, mitochondrial (822 aa).

Residues 1–70 constitute a mitochondrion transit peptide; the sequence is MIVFMRIIHV…QKNDPISAKA (70 aa). 16 PPR repeats span residues 48–82, 83–117, 145–179, 180–210, 211–245, 246–280, 281–311, 312–346, 347–381, 382–416, 417–447, 448–482, 483–513, 514–548, 549–584, and 585–619; these read DSHAYGAMLRRCIQKNDPISAKAIHCDILKKGSCL, DLFATNILLNAYVKAGFDKDALNLFDEMPERNNVS, NPHVFTSFLKLFVSLDKAEICPWLHSPIVKLGYDS, NAFVGAALINAYSVCGSVDSARTVFEGILCK, DIVVWAGIVSCYVENGYFEDSLKLLSCMRMAGFMP, NNYTFDTALKASIGLGAFDFAKGVHGQILKTCYVL, DPRVGVGLLQLYTQLGDMSDAFKVFNEMPKN, DVVPWSFMIARFCQNGFCNEAVDLFIRMREAFVVP, NEFTLSSILNGCAIGKCSGLGEQLHGLVVKVGFDL, DIYVSNALIDVYAKCEKMDTAVKLFAELSSKNEVS, WNTVIVGYENLGEGGKAFSMFREALRNQVSV, TEVTFSSALGACASLASMDLGVQVHGLAIKTNNAK, KVAVSNSLIDMYAKCGDIKFAQSVFNEMETI, DVASWNALISGYSTHGLGRQALRILDIMKDRDCKP, NGLTFLGVLSGCSNAGLIDQGQECFESMIRDHGIEP, and CLEHYTCMVRLLGRSGQLDKAMKLIEGIPYEPSVM. A type E motif region spans residues 620–695; sequence IWRAMLSASM…EPGLSWIEHQ (76 aa). The interval 696 to 726 is type E(+) motif; it reads GDVHYFSVGLSDHPDMKLINGMLEWLNMKAT. The type DYW motif stretch occupies residues 727 to 822; it reads RAGYVPDRNA…AGVCSCGDHW (96 aa).

It belongs to the PPR family. PCMP-H subfamily.

Its subcellular location is the mitochondrion. This Arabidopsis thaliana (Mouse-ear cress) protein is Putative pentatricopeptide repeat-containing protein At5g13230, mitochondrial (PCMP-H89).